Consider the following 247-residue polypeptide: ATP synthase subunit a (247 aa).

Helical transmembrane passes span 23 to 43, 90 to 110, 116 to 136, 145 to 165, 194 to 214, and 215 to 235; these read ISFTNSSAMMVLSICLITLFL, LFMFVLFGNLLGMMPIPVIGF, VIVTFAMALVVFVGVTVIGFA, MFFPHGAPIATAVILIPIELI, GFVVSLGAFYLIPGAVPFAFL, and SAITVLEFGIALLQAYVFTIL.

Belongs to the ATPase A chain family. In terms of assembly, F-type ATPases have 2 components, CF(1) - the catalytic core - and CF(0) - the membrane proton channel. CF(1) has five subunits: alpha(3), beta(3), gamma(1), delta(1), epsilon(1). CF(0) has three main subunits: a(1), b(2) and c(9-12). The alpha and beta chains form an alternating ring which encloses part of the gamma chain. CF(1) is attached to CF(0) by a central stalk formed by the gamma and epsilon chains, while a peripheral stalk is formed by the delta and b chains.

It is found in the cell inner membrane. Its function is as follows. Key component of the proton channel; it plays a direct role in the translocation of protons across the membrane. The protein is ATP synthase subunit a of Paramagnetospirillum magneticum (strain ATCC 700264 / AMB-1) (Magnetospirillum magneticum).